The sequence spans 620 residues: Chaperone protein HscA homolog (620 aa).

The protein belongs to the heat shock protein 70 family.

Functionally, chaperone involved in the maturation of iron-sulfur cluster-containing proteins. Has a low intrinsic ATPase activity which is markedly stimulated by HscB. This is Chaperone protein HscA homolog from Pseudomonas syringae pv. tomato (strain ATCC BAA-871 / DC3000).